A 318-amino-acid chain; its full sequence is Gamma-glutamyl hydrolase (318 aa).

The signal sequence occupies residues 1–24 (MARLGRLLSVLGLVLCGATGLGLS). In terms of domain architecture, Gamma-glutamyl hydrolase spans 25–318 (APPAPTPKKP…SSFQQSYIFD (294 aa)). The N-linked (GlcNAc...) asparagine glycan is linked to asparagine 116. Residue cysteine 134 is the Nucleophile of the active site. Residues asparagine 163 and asparagine 203 are each glycosylated (N-linked (GlcNAc...) asparagine). The active-site Proton donor is histidine 244. The N-linked (GlcNAc...) asparagine glycan is linked to asparagine 307.

The protein belongs to the peptidase C26 family. In terms of assembly, homodimer.

The protein localises to the secreted. Its subcellular location is the extracellular space. The protein resides in the lysosome. It localises to the melanosome. The catalysed reaction is (6S)-5,6,7,8-tetrahydrofolyl-(gamma-L-Glu)(n) + (n-1) H2O = (6S)-5,6,7,8-tetrahydrofolate + (n-1) L-glutamate. Hydrolyzes the polyglutamate sidechains of pteroylpolyglutamates. Progressively removes gamma-glutamyl residues from pteroylpoly-gamma-glutamate to yield pteroyl-alpha-glutamate (folic acid) and free glutamate. May play an important role in the bioavailability of dietary pteroylpolyglutamates and in the metabolism of pteroylpolyglutamates and antifolates. Exhibits either endo- or exopeptidase activity depending upon the tissue of origin. When secreted, it acts primarily as an endopeptidase. The chain is Gamma-glutamyl hydrolase (GGH) from Bos taurus (Bovine).